The chain runs to 90 residues: Small ribosomal subunit protein mS37 (90 aa).

A disulfide bridge connects residues Cys-27 and Cys-58.

Belongs to the mitochondrion-specific ribosomal protein mS37 family. As to quaternary structure, component of the mitochondrial small ribosomal subunit (mt-SSU). Mature N.crassa 74S mitochondrial ribosomes consist of a small (37S) and a large (54S) subunit. The 37S small subunit contains a 16S ribosomal RNA (16S mt-rRNA) and 32 different proteins. The 54S large subunit contains a 23S rRNA (23S mt-rRNA) and 42 different proteins.

It localises to the mitochondrion. Component of the mitochondrial ribosome (mitoribosome), a dedicated translation machinery responsible for the synthesis of mitochondrial genome-encoded proteins, including at least some of the essential transmembrane subunits of the mitochondrial respiratory chain. The mitoribosomes are attached to the mitochondrial inner membrane and translation products are cotranslationally integrated into the membrane. This is Small ribosomal subunit protein mS37 (mrp10) from Neurospora crassa (strain ATCC 24698 / 74-OR23-1A / CBS 708.71 / DSM 1257 / FGSC 987).